We begin with the raw amino-acid sequence, 71 residues long: uncharacterized protein (71 aa).

Residues 37-57 (IGVGVSDGVSAGVGVGVAMII) form a helical membrane-spanning segment.

The protein resides in the membrane. This is an uncharacterized protein from Dictyostelium discoideum (Social amoeba).